A 210-amino-acid chain; its full sequence is Protein LURP-one-related 5 (210 aa).

It belongs to the LOR family.

Its function is as follows. Might be related to the phospholipid scramblase and tubby-like superfamily of membrane tethered transcription factors. The chain is Protein LURP-one-related 5 from Arabidopsis thaliana (Mouse-ear cress).